The sequence spans 583 residues: Trehalase (583 aa).

Positions 1 to 23 (MPGRTWELCLLLLLGLGLGSQEA) are cleaved as a signal peptide. Asn-78 carries an N-linked (GlcNAc...) asparagine glycan. Substrate is bound by residues Arg-168, 175-176 (WD), Asn-212, and 221-223 (RSQ). 2 N-linked (GlcNAc...) asparagine glycosylation sites follow: Asn-239 and Asn-261. Substrate is bound by residues 286 to 288 (RPE) and Gly-319. Asp-321 functions as the Proton donor/acceptor in the catalytic mechanism. Asn-369 carries N-linked (GlcNAc...) asparagine glycosylation. Glu-514 functions as the Proton donor/acceptor in the catalytic mechanism. Substrate is bound at residue Glu-529. The GPI-anchor amidated serine moiety is linked to residue Ser-556. Positions 557-583 (GAKLAFLEPHCLAATLLPSLLLSLLPW) are cleaved as a propeptide — removed in mature form.

It belongs to the glycosyl hydrolase 37 family. In terms of assembly, homodimer; disulfide-linked. Expressed in kidney, liver and small intestine. Also more weakly expressed in pancreas.

Its subcellular location is the cell membrane. The enzyme catalyses alpha,alpha-trehalose + H2O = alpha-D-glucose + beta-D-glucose. In terms of biological role, intestinal trehalase is probably involved in the hydrolysis of ingested trehalose. This chain is Trehalase, found in Homo sapiens (Human).